We begin with the raw amino-acid sequence, 356 residues long: Histidinol-phosphate aminotransferase (356 aa).

K214 is modified (N6-(pyridoxal phosphate)lysine).

It belongs to the class-II pyridoxal-phosphate-dependent aminotransferase family. Histidinol-phosphate aminotransferase subfamily. As to quaternary structure, homodimer. It depends on pyridoxal 5'-phosphate as a cofactor.

The enzyme catalyses L-histidinol phosphate + 2-oxoglutarate = 3-(imidazol-4-yl)-2-oxopropyl phosphate + L-glutamate. It functions in the pathway amino-acid biosynthesis; L-histidine biosynthesis; L-histidine from 5-phospho-alpha-D-ribose 1-diphosphate: step 7/9. The protein is Histidinol-phosphate aminotransferase of Escherichia coli O8 (strain IAI1).